A 502-amino-acid chain; its full sequence is Lysine--tRNA ligase (502 aa).

Residues 1-22 (MSDHEQAQAQSQDENQIMAERR) form a disordered region. Residues E413 and E420 each coordinate Mg(2+).

The protein belongs to the class-II aminoacyl-tRNA synthetase family. Homodimer. Requires Mg(2+) as cofactor.

Its subcellular location is the cytoplasm. It catalyses the reaction tRNA(Lys) + L-lysine + ATP = L-lysyl-tRNA(Lys) + AMP + diphosphate. The chain is Lysine--tRNA ligase from Chromobacterium violaceum (strain ATCC 12472 / DSM 30191 / JCM 1249 / CCUG 213 / NBRC 12614 / NCIMB 9131 / NCTC 9757 / MK).